A 123-amino-acid polypeptide reads, in one-letter code: Histone H2B.1/H2B.2 (123 aa).

Positions 1–30 are disordered; the sequence is MPPKVSGKAAKKAGKAQKNITKGDKKKNRK. Serine 110 carries O-linked (GlcNAc) serine glycosylation. Residue lysine 118 forms a Glycyl lysine isopeptide (Lys-Gly) (interchain with G-Cter in ubiquitin) linkage.

The protein belongs to the histone H2B family. As to quaternary structure, the nucleosome is a histone octamer containing two molecules each of H2A, H2B, H3 and H4 assembled in one H3-H4 heterotetramer and two H2A-H2B heterodimers. The octamer wraps approximately 147 bp of DNA. Post-translationally, monoubiquitination of Lys-118 gives a specific tag for epigenetic transcriptional activation and is also prerequisite for histone H3 'Lys-4' and 'Lys-79' methylation. GlcNAcylation at Ser-110 promotes monoubiquitination of Lys-118. It fluctuates in response to extracellular glucose, and associates with transcribed genes.

The protein resides in the nucleus. It localises to the chromosome. Core component of nucleosome. Nucleosomes wrap and compact DNA into chromatin, limiting DNA accessibility to the cellular machineries which require DNA as a template. Histones thereby play a central role in transcription regulation, DNA repair, DNA replication and chromosomal stability. DNA accessibility is regulated via a complex set of post-translational modifications of histones, also called histone code, and nucleosome remodeling. This is Histone H2B.1/H2B.2 from Tigriopus californicus (Marine copepod).